The chain runs to 188 residues: Aspartic protease inhibitor 11 (188 aa).

An N-linked (GlcNAc...) asparagine glycan is attached at Asn19. 3 disulfides stabilise this stretch: Cys48-Cys93, Cys142-Cys159, and Cys150-Cys153.

The protein belongs to the protease inhibitor I3 (leguminous Kunitz-type inhibitor) family.

It localises to the vacuole. Inhibitor of cathepsin D (aspartic protease) and trypsin (serine protease). May protect the plant by inhibiting proteases of invading organisms. This chain is Aspartic protease inhibitor 11, found in Solanum tuberosum (Potato).